The chain runs to 99 residues: Cytochrome c oxidase subunit 4 isoform 1, mitochondrial (99 aa).

At 1–73 the chain is on the mitochondrial matrix side; that stretch reads SVVKSEDFTL…SFAEMNRRSN (73 aa). The residue at position 4 (Lys-4) is an N6-acetyllysine; alternate. Position 4 is an N6-succinyllysine; alternate (Lys-4). N6-acetyllysine is present on Lys-28. Residues Ser-31 and Ser-33 each carry the phosphoserine modification. At Lys-35 the chain carries N6-acetyllysine; alternate. At Lys-35 the chain carries N6-succinyllysine; alternate. Position 42 is an N6-acetyllysine (Lys-42). A helical membrane pass occupies residues 74–99; sequence EWKTVVGTAMFFIGITALVIMWEKLY.

Belongs to the cytochrome c oxidase IV family. Component of the cytochrome c oxidase (complex IV, CIV), a multisubunit enzyme composed of 14 subunits. The complex is composed of a catalytic core of 3 subunits MT-CO1, MT-CO2 and MT-CO3, encoded in the mitochondrial DNA, and 11 supernumerary subunits COX4I, COX5A, COX5B, COX6A, COX6B, COX6C, COX7A, COX7B, COX7C, COX8 and NDUFA4, which are encoded in the nuclear genome. The complex exists as a monomer or a dimer and forms supercomplexes (SCs) in the inner mitochondrial membrane with NADH-ubiquinone oxidoreductase (complex I, CI) and ubiquinol-cytochrome c oxidoreductase (cytochrome b-c1 complex, complex III, CIII), resulting in different assemblies (supercomplex SCI(1)III(2)IV(1) and megacomplex MCI(2)III(2)IV(2)). Interacts with PHB2; the interaction decreases in absence of SPHK2. Interacts with AFG1L. Interacts with ABCB7; this interaction allows the regulation of cellular iron homeostasis and cellular reactive oxygen species (ROS) levels in cardiomyocytes. Interacts with FLVCR2; this interaction occurs in the absence of heme and is disrupted upon heme binding. Interacts with IRGC.

Its subcellular location is the mitochondrion inner membrane. The protein operates within energy metabolism; oxidative phosphorylation. Functionally, component of the cytochrome c oxidase, the last enzyme in the mitochondrial electron transport chain which drives oxidative phosphorylation. The respiratory chain contains 3 multisubunit complexes succinate dehydrogenase (complex II, CII), ubiquinol-cytochrome c oxidoreductase (cytochrome b-c1 complex, complex III, CIII) and cytochrome c oxidase (complex IV, CIV), that cooperate to transfer electrons derived from NADH and succinate to molecular oxygen, creating an electrochemical gradient over the inner membrane that drives transmembrane transport and the ATP synthase. Cytochrome c oxidase is the component of the respiratory chain that catalyzes the reduction of oxygen to water. Electrons originating from reduced cytochrome c in the intermembrane space (IMS) are transferred via the dinuclear copper A center (CU(A)) of subunit 2 and heme A of subunit 1 to the active site in subunit 1, a binuclear center (BNC) formed by heme A3 and copper B (CU(B)). The BNC reduces molecular oxygen to 2 water molecules using 4 electrons from cytochrome c in the IMS and 4 protons from the mitochondrial matrix. The sequence is that of Cytochrome c oxidase subunit 4 isoform 1, mitochondrial (COX4I1) from Mandrillus sphinx (Mandrill).